Here is a 79-residue protein sequence, read N- to C-terminus: uncharacterized protein (79 aa).

The first 33 residues, 1–33, serve as a signal peptide directing secretion; the sequence is MRFIIRTVMLIALVWIGLLLSGYGVLIGSKENA.

This is an uncharacterized protein from Escherichia coli O157:H7.